The sequence spans 452 residues: MQSIFGTDGIRGRFDKEITYSLAYKVGYALGFIVKTNNPILIGRDTRISGEILFEAISKGIKDAGKEFIYLGICPTPAIPFLIKKEKFSSGIMISASHNPPEFNGIKIFDKNGEKIKRDFEKRIELIMARVDNNKIITNKYKSVSKNNELLNIYTKGLIDSMENENLEGMKIILDACYGSATTCAESVFKKLGANVKVINNDKDGLKINLNCGSTCLDPLNKAIKENDADMGFSFDGDADRVIGVDSKGNILDGDHILFLWGRELLEEKVLTNNTIISTRMANLGFERNWNNIGGILYRTEVGDKFIFAALKEKKALLGGEQSGHILSKINNFCGDGILTALQISKYCKKKNINLESWLNSSFLPYPQKLTNILLSFDFKNINNSNKDLINESIESFSSIKKNDCRVYIRPSGTEPVLRILVEAQNQKEVDFLSTKITTELRSKINKISNNL.

Residue serine 97 is the Phosphoserine intermediate of the active site. Residues serine 97, aspartate 236, aspartate 238, and aspartate 240 each contribute to the Mg(2+) site. At serine 97 the chain carries Phosphoserine.

It belongs to the phosphohexose mutase family. Mg(2+) is required as a cofactor. Activated by phosphorylation.

It carries out the reaction alpha-D-glucosamine 1-phosphate = D-glucosamine 6-phosphate. Catalyzes the conversion of glucosamine-6-phosphate to glucosamine-1-phosphate. In Prochlorococcus marinus (strain MIT 9515), this protein is Phosphoglucosamine mutase.